The primary structure comprises 295 residues: 33 kDa chaperonin (295 aa).

Disulfide bonds link Cys-238–Cys-240 and Cys-271–Cys-274.

It belongs to the HSP33 family. In terms of processing, under oxidizing conditions two disulfide bonds are formed involving the reactive cysteines. Under reducing conditions zinc is bound to the reactive cysteines and the protein is inactive.

It localises to the cytoplasm. In terms of biological role, redox regulated molecular chaperone. Protects both thermally unfolding and oxidatively damaged proteins from irreversible aggregation. Plays an important role in the bacterial defense system toward oxidative stress. In Clostridium botulinum (strain Alaska E43 / Type E3), this protein is 33 kDa chaperonin.